Reading from the N-terminus, the 698-residue chain is Serotransferrin (698 aa).

A signal peptide spans 1-19 (MRFAVGALLACAALGLCLA). Transferrin-like domains follow at residues 25-347 (VKWC…NQRE) and 360-683 (VKWC…NIRK). 2 cysteine pairs are disulfide-bonded: Cys-28–Cys-67 and Cys-38–Cys-58. Arg-42 is modified (dimethylated arginine). Fe(3+) is bound by residues Asp-82 and Tyr-114. 8 disulfides stabilise this stretch: Cys-137/Cys-213, Cys-156/Cys-350, Cys-177/Cys-193, Cys-180/Cys-196, Cys-190/Cys-198, Cys-246/Cys-260, Cys-363/Cys-395, and Cys-373/Cys-386. Hydrogencarbonate-binding residues include Thr-139, Arg-143, Ala-145, and Gly-146. A Fe(3+)-binding site is contributed by Tyr-207. Position 268 (His-268) interacts with Fe(3+). Ser-388 is modified (phosphoserine). Residues Asp-410 and Tyr-447 each coordinate Fe(3+). Cystine bridges form between Cys-420–Cys-693, Cys-435–Cys-656, Cys-471–Cys-542, Cys-495–Cys-684, Cys-505–Cys-519, Cys-516–Cys-525, Cys-582–Cys-596, and Cys-634–Cys-639. Thr-473, Arg-477, Ala-479, and Gly-480 together coordinate hydrogencarbonate. Asn-512 carries N-linked (GlcNAc...) asparagine glycosylation. A Fe(3+)-binding site is contributed by Tyr-536. His-604 provides a ligand contact to Fe(3+). Ser-685 is modified (phosphoserine).

It belongs to the transferrin family. In terms of assembly, monomer. Part of a complex composed of SLC40A1/ferroportin, TF/transferrin and HEPH/hephaestin that transfers iron from cells to transferrin. Expressed by the liver and secreted in plasma.

Its subcellular location is the secreted. Its function is as follows. Transferrins are iron binding transport proteins which can bind two Fe(3+) ions in association with the binding of an anion, usually bicarbonate. It is responsible for the transport of iron from sites of absorption and heme degradation to those of storage and utilization. Serum transferrin may also have a further role in stimulating cell proliferation. This is Serotransferrin (Tf) from Rattus norvegicus (Rat).